Consider the following 109-residue polypeptide: N-alpha-acetyltransferase 38, NatC auxiliary subunit (109 aa).

Residues 23–101 enclose the Sm domain; sequence LARCKLENLL…VVSIEVETES (79 aa).

Belongs to the snRNP Sm proteins family. Component of the N-terminal acetyltransferase C (NatC) complex.

It is found in the cytoplasm. The protein resides in the nucleus. Auxillary component of the N-terminal acetyltransferase C (NatC) complex which catalyzes acetylation of N-terminal methionine residues. N-terminal acetylation protects proteins from ubiquitination and degradation by the N-end rule pathway. This Danio rerio (Zebrafish) protein is N-alpha-acetyltransferase 38, NatC auxiliary subunit (naa38).